We begin with the raw amino-acid sequence, 267 residues long: MAKLLLFLLPAILGLLVPPRSWSAVALGTNYLLSGQTLETEGHLKNGDFDLVMQDDCNLVLYNGNWQSNTANKGRDCKLTLTDHGELVINNGDGSTVWRSGAQSVKGDYAAVVHPEGRLVVFSPSVFKIDPSVPGLNSLRFRNIPFTNNLLFSGQVLYGDGRLTAKNHQLVMQGDCNLVLYGGKYGWQSNTHGNGEHCFLRLNHKGELIIEDDDFKTIWSSSYSSKQGDYVLILRDDGVAVIYGPAIWETSPQAKEKMIGMVTAGKL.

The first 26 residues, Met1–Ala26, serve as a signal peptide directing secretion. 2 consecutive Bulb-type lectin domains span residues Thr29–Pro134 and Asn148–Lys255. Beta-D-mannose contacts are provided by residues Gln54–Asn58, Tyr62, Trp66, Gln67, Gln173–Asn177, Tyr181, and Tyr185–Gln188. The Carbohydrate-binding motif 1 motif lies at Gln54–Tyr62. Cystine bridges form between Cys57/Cys77 and Cys176/Cys198. The Carbohydrate-binding motif 2 motif lies at Gln173 to Tyr181.

As to quaternary structure, forms heterotetramer of 2 chains 1 and 2 chains 2 arranged as a dimer of chain 1 and chain 2 heterodimers.

It is found in the secreted. In terms of biological role, mannose-specific lectin. Shows agglutinating activity towards erythrocytes from rabbit. The polypeptide is Mannose-specific lectin 1 (Colocasia esculenta (Wild taro)).